A 928-amino-acid chain; its full sequence is DNA ligase 4 (928 aa).

ATP contacts are provided by E302, K304, R309, E362, F409, E469, K474, K492, and K494. The active-site N6-AMP-lysine intermediate is K304. A Mg(2+)-binding site is contributed by E362. E469 is a binding site for Mg(2+). 2 BRCT domains span residues 673–769 (VESD…PYFI) and 821–927 (PWIY…DYKF).

This sequence belongs to the ATP-dependent DNA ligase family. The cofactor is Mg(2+).

It localises to the nucleus. The catalysed reaction is ATP + (deoxyribonucleotide)n-3'-hydroxyl + 5'-phospho-(deoxyribonucleotide)m = (deoxyribonucleotide)n+m + AMP + diphosphate.. Functionally, DNA ligase involved in DNA non-homologous end joining (NHEJ); required for double-strand break (DSB) repair. Not required for the repair of DSBs induced by ionizing radiation or UV light. Has an important role in morphogenesis, positively affecting the capacity to form hyphae. The protein is DNA ligase 4 (LIG4) of Candida albicans (strain SC5314 / ATCC MYA-2876) (Yeast).